We begin with the raw amino-acid sequence, 402 residues long: MGEDISKIVIIGAGQAGATVAFGLRRNGFAGEITLVGEESHLPYERPQLSKEMLRPEASAHKSIKTRADYEEQSILLELGCKVVRADAQAHSIVLDDGRQLAFDRLVIATGVQPRRLSSAFQGAHRVHYLRTLEDAARLRADLEAGKSLAIVGGGVIGLEVAAAARALNCPVTLIEAADRLMSRSVDEVVSAYLDRAHRRNGVDIRYGVAATELLDDGRLRLSDGGTVPAEAVLVGIGVTPNIEGFEHLDITDATGVRVDAYSQTVVPGIFATGDIASQPNGGGFGRIETWANAQDHALNLVKNLMGEAVPYEAPVWFWSDQGPINLQVVGDAANGRRIVRGDEHGDVFSVFRLDANQQVIGCATVNSPKDMAVARRWVKQRSSVDPQRLADPTIPLRDCAV.

A16, K51, V83, R131, and D275 together coordinate FAD.

It belongs to the FAD-dependent oxidoreductase family. The p-cumate 2,3-dioxygenase multicomponent enzyme system is composed of an electron transfer component and a dioxygenase component (iron sulfur protein (ISP)). The electron transfer component is composed of a ferredoxin reductase (CmtAa) and a ferredoxin (CmtAd), and the dioxygenase component is formed of a large alpha subunit (CmtAb) and a small beta subunit (CmtAc). It depends on FAD as a cofactor.

The catalysed reaction is 2 reduced [2Fe-2S]-[ferredoxin] + NAD(+) + H(+) = 2 oxidized [2Fe-2S]-[ferredoxin] + NADH. The protein operates within aromatic compound metabolism; p-cumate degradation; acetaldehyde and pyruvate from p-cumate. Component of the p-cumate 2,3-dioxygenase multicomponent enzyme system which catalyzes the incorporation of both atoms of molecular oxygen into p-cumate to form cis-2,3-dihydroxy-2,3-dihydro-p-cumate. Ferredoxin reductase catalyzes the transfer of electrons from NADH to ferredoxin (CmtAd). This Pseudomonas putida (Arthrobacter siderocapsulatus) protein is p-cumate 2,3-dioxygenase system, ferredoxin--NAD(+) reductase component.